A 1101-amino-acid polypeptide reads, in one-letter code: Rho GTPase-activating protein 30 (1101 aa).

Residues 20–215 (CDLQEHLQHS…FILTHVDQLF (196 aa)) form the Rho-GAP domain. Disordered regions lie at residues 224 to 243 (EVES…SPED), 300 to 400 (HETK…RAGG), and 451 to 529 (ALQH…AEDG). A compositionally biased stretch (basic and acidic residues) spans 308-318 (RGAEDREDKSN). Positions 360 to 376 (LENDSIEAAEGEQEPEA) are enriched in acidic residues. Pro residues predominate over residues 459-472 (ASGPGPGPGLGPGP). Over residues 508–520 (DSFSFLEDSSSSE) the composition is skewed to low complexity. S576 carries the post-translational modification Phosphoserine. Disordered regions lie at residues 621-906 (GPKP…QPSP) and 965-991 (CPRP…SWRN). Composition is skewed to basic and acidic residues over residues 658–694 (GEDK…DRGE), 701–735 (TKVR…KGVE), 759–770 (EEAQVEAGRDLE), and 779–822 (AEEK…DSRS). The span at 976-991 (GERAWGSRASRSSWRN) shows a compositional bias: low complexity. Phosphoserine is present on S996. The disordered stretch occupies residues 1050–1101 (LELPSEGAEGSGSRSRLSLPPREPQVPDPLLSSQRRSYAFETQANPGKGEGL). Low complexity predominate over residues 1053–1069 (PSEGAEGSGSRSRLSLP). The segment covering 1080 to 1094 (LSSQRRSYAFETQAN) has biased composition (polar residues).

Interacts with RHOU in a GTP-independent manner.

The protein localises to the cytoplasmic vesicle. Its function is as follows. GTPase-activating protein (GAP) for RAC1 and RHOA, but not for CDC42. This Homo sapiens (Human) protein is Rho GTPase-activating protein 30 (ARHGAP30).